The sequence spans 307 residues: Mycothiol acetyltransferase (307 aa).

N-acetyltransferase domains follow at residues 12-152 (TRTD…APIP) and 160-307 (VTLR…YQRS). A 1D-myo-inositol 2-(L-cysteinylamino)-2-deoxy-alpha-D-glucopyranoside-binding site is contributed by Glu-43. 87 to 89 (LAV) is a binding site for acetyl-CoA. 1D-myo-inositol 2-(L-cysteinylamino)-2-deoxy-alpha-D-glucopyranoside-binding residues include Glu-187, Lys-227, and Glu-239. Acetyl-CoA-binding positions include 243–245 (LGV) and 250–256 (HGGGLGK). Tyr-278 lines the 1D-myo-inositol 2-(L-cysteinylamino)-2-deoxy-alpha-D-glucopyranoside pocket.

The protein belongs to the acetyltransferase family. MshD subfamily. As to quaternary structure, monomer.

The enzyme catalyses 1D-myo-inositol 2-(L-cysteinylamino)-2-deoxy-alpha-D-glucopyranoside + acetyl-CoA = mycothiol + CoA + H(+). Its function is as follows. Catalyzes the transfer of acetyl from acetyl-CoA to desacetylmycothiol (Cys-GlcN-Ins) to form mycothiol. The chain is Mycothiol acetyltransferase from Salinispora arenicola (strain CNS-205).